A 214-amino-acid chain; its full sequence is MGRRPARCYRYCKNKPYPKSRFCRGVPDAKIRIFDLGRKKAKVDEFPLCGHMVSDEYEQLSSEALEAARICANKYMVKSCGKDGFHIRVRLHPFHVIRINKMLSCAGADRLQTGMRGAFGKPQGTVARVHIGQVIMSIRTKLQNKEHVIEALRRAKFKFPGRQKIHISKKWGFTKFNADEFEDMVAEKRLIPDGCGVKYIPSRGPLDKWRALHS.

Arg32 carries the post-translational modification Citrulline. Lys175 is covalently cross-linked (Glycyl lysine isopeptide (Lys-Gly) (interchain with G-Cter in SUMO2)). Lys188 participates in a covalent cross-link: Glycyl lysine isopeptide (Lys-Gly) (interchain with G-Cter in ubiquitin).

It belongs to the universal ribosomal protein uL16 family. In terms of assembly, component of the large ribosomal subunit. Mature ribosomes consist of a small (40S) and a large (60S) subunit. The 40S subunit contains about 33 different proteins and 1 molecule of RNA (18S). The 60S subunit contains about 49 different proteins and 3 molecules of RNA (28S, 5.8S and 5S). Citrullinated by PADI4. In terms of processing, ufmylated by UFL1.

The protein localises to the cytoplasm. Functionally, component of the large ribosomal subunit. Plays a role in the formation of actively translating ribosomes. May play a role in the embryonic brain development. This Homo sapiens (Human) protein is Large ribosomal subunit protein uL16.